The primary structure comprises 261 residues: Flagellar L-ring protein (261 aa).

Positions 1–18 are cleaved as a signal peptide; sequence MAAMKRLLASSLLILLSG. A lipid anchor (N-palmitoyl cysteine) is attached at C19. The S-diacylglycerol cysteine moiety is linked to residue C19. Residues 37–67 form a disordered region; the sequence is TVDAVEGDKSESNSGLTDALRNRTDPVAGDP.

It belongs to the FlgH family. The basal body constitutes a major portion of the flagellar organelle and consists of four rings (L,P,S, and M) mounted on a central rod.

It localises to the cell outer membrane. It is found in the bacterial flagellum basal body. Assembles around the rod to form the L-ring and probably protects the motor/basal body from shearing forces during rotation. This chain is Flagellar L-ring protein, found in Vibrio cholerae serotype O1 (strain ATCC 39541 / Classical Ogawa 395 / O395).